Here is a 371-residue protein sequence, read N- to C-terminus: MSNFTYTSAFNLSDNSPFNPAIGSSSSSSSALVVASDDDNNTDDACSICLEPFTLQDPSTVTSCKHEYHLQCIIEWSQRSKECPICWQLFVLRDPASQELLAAVEKERLLKTRNISSSSPISIHHSHDDFHSEEEESQFSSFDEQFLRHLTEAAHRRCLLRRRDGQISSSLVSSSDPTTIHPTDLVNLYRLSAISHVEHQNSNPCPSPGSMTPSPVSGHSSIPADSNNGSRISPGPSPSRSSQSPKSPEASSLPEAIKSKLAAASAKYKESISKSKQGLKEKLLARNNSVKELSKGVQREMNAGIAGVARMIERMDFSSKRFGGSAHVSTSTATASGFNFSFKGKRVEANSKSNNNGDKTEPQKLQGGETC.

An RING-type; atypical zinc finger spans residues 46-87 (CSICLEPFTLQDPSTVTSCKHEYHLQCIIEWSQRSKECPICW). 2 disordered regions span residues 199 to 254 (HQNS…SSLP) and 348 to 371 (EANSKSNNNGDKTEPQKLQGGETC). Residues 200–225 (QNSNPCPSPGSMTPSPVSGHSSIPAD) are compositionally biased toward polar residues. Residues 226–252 (SNNGSRISPGPSPSRSSQSPKSPEASS) show a composition bias toward low complexity.

In terms of assembly, interacts with KRP6. As to expression, expressed in stems, flowers, green siliques, cauline leaves, seeds and roots.

The enzyme catalyses S-ubiquitinyl-[E2 ubiquitin-conjugating enzyme]-L-cysteine + [acceptor protein]-L-lysine = [E2 ubiquitin-conjugating enzyme]-L-cysteine + N(6)-ubiquitinyl-[acceptor protein]-L-lysine.. It functions in the pathway protein modification; protein ubiquitination. E3 ubiquitin-protein ligase involved in the positive regulation of the gametogenesis progression. Mediates the proteasomal degradation of KRP6, a cyclin-dependent kinase inhibitor which accumulates during meiosis and blocks the progression of subsequent mitoses during gametophyte development. Functions in association with RHF2A. Possesses E3 ubiquitin-protein ligase activity when associated with the E2 enzyme UBC8 in vitro. The chain is E3 ubiquitin-protein ligase RHF1A from Arabidopsis thaliana (Mouse-ear cress).